The chain runs to 620 residues: MDSHTLIQALIYLGSAALIVPIAVRLGLGSVLGYLIAGCIIGPWGLRLVTDAESILHFAEIGVVLMLFIIGLELDPQRLWKLRAAVFGGGALQMVICGGLLGLFCMLLGLRWQVAELIGMTLALSSTAIAMQAMNERNLMVTQMGRSAFAVLLFQDIAAIPLVAMIPLLAASSASTTMGAFVLSALKVAGALALVVLLGRYVTRPALRFVARSGLREVFSAVALFLVFGFGLLLEEVGLSMAMGAFLAGVLLASSEYRHALESDIEPFKGLLLGLFFIGVGMSIDFGTLIENPLRIVILLLGFLIIKIAMLWLIARPLQVPNKQRRWFAVLLGQGSEFAFVVFGAAQMANVLEPEWAKSLTLAVALSMAATPILLVILNRLEQSSTEEAREADEIDEEQPRVIIAGFGRFGQITGRLLLSSGVKMVVLDHDPDHIETLRKFGMKVFYGDATRMDLLESAGAAKAEVLINAIDDPQTNLQLTEMVKEHFPHLQIIARARDVDHYIRLRQAGVEKPERETFEGALKTGRLALESLGLGPYEARERADVFRRFNIQMVEEMAMVENDTKARAAVYKRTSAMLSEIITEDREHLSLIQRHGWQGTEEGKHTGNMADEPETKPSS.

12 helical membrane passes run 4–24 (HTLI…PIAV), 26–46 (LGLG…PWGL), 54–74 (SILH…GLEL), 90–110 (GALQ…LLGL), 114–134 (VAEL…MQAM), 149–169 (FAVL…IPLL), 178–198 (MGAF…VVLL), 218–238 (VFSA…EEVG), 270–290 (GLLL…GTLI), 294–314 (LRIV…LWLI), 327–347 (WFAV…GAAQ), and 359–379 (SLTL…VILN). The 120-residue stretch at 399-518 (QPRVIIAGFG…AGVEKPERET (120 aa)) folds into the RCK N-terminal domain. A disordered region spans residues 597–620 (GWQGTEEGKHTGNMADEPETKPSS).

It belongs to the monovalent cation:proton antiporter 2 (CPA2) transporter (TC 2.A.37) family. KefC subfamily. Homodimer. Interacts with the regulatory subunit KefF.

It localises to the cell inner membrane. Functionally, pore-forming subunit of a potassium efflux system that confers protection against electrophiles. Catalyzes K(+)/H(+) antiport. The chain is Glutathione-regulated potassium-efflux system protein KefC from Escherichia coli O45:K1 (strain S88 / ExPEC).